Consider the following 431-residue polypeptide: tRNA-specific 2-thiouridylase MnmA (431 aa).

Residues 35–42 (AMSGGVDS) and leucine 61 contribute to the ATP site. Catalysis depends on cysteine 129, which acts as the Nucleophile. A disulfide bond links cysteine 129 and cysteine 226. Glycine 153 contacts ATP. Residues 176-178 (RDQ) are interaction with tRNA. The active-site Cysteine persulfide intermediate is cysteine 226. The interval 407–431 (PKPPNEDLLDTNESSDLVSPKRSAC) is disordered.

Belongs to the MnmA/TRMU family.

The protein localises to the cytoplasm. The catalysed reaction is S-sulfanyl-L-cysteinyl-[protein] + uridine(34) in tRNA + AH2 + ATP = 2-thiouridine(34) in tRNA + L-cysteinyl-[protein] + A + AMP + diphosphate + H(+). In terms of biological role, catalyzes the 2-thiolation of uridine at the wobble position (U34) of tRNA, leading to the formation of s(2)U34. The sequence is that of tRNA-specific 2-thiouridylase MnmA from Beijerinckia indica subsp. indica (strain ATCC 9039 / DSM 1715 / NCIMB 8712).